The sequence spans 446 residues: Probable glucuronosyltransferase Os04g0650300 (446 aa).

Residues 1–30 lie on the Cytoplasmic side of the membrane; it reads MKLPLLRPLWPMLSPAAGSPDSPPEPSKPS. The helical; Signal-anchor for type II membrane protein transmembrane segment at 31–51 threads the bilayer; the sequence is LPAAWLLLHALFCATSMAVGF. At 52–446 the chain is on the lumenal side; it reads RFSRLIVYLL…TTLLNTEGQH (395 aa). Residue asparagine 87 is glycosylated (N-linked (GlcNAc...) asparagine). The disordered stretch occupies residues 425–446; that stretch reads QQDAKPETPLKRTTLLNTEGQH.

It belongs to the glycosyltransferase 43 family.

Its subcellular location is the golgi apparatus membrane. Functionally, involved in the synthesis of glucuronoxylan hemicellulose in secondary cell walls. This chain is Probable glucuronosyltransferase Os04g0650300, found in Oryza sativa subsp. japonica (Rice).